The primary structure comprises 274 residues: MAIHLYKTSTPSTRNGAVDNQVKSNPRNNLIYGQRRCGKGRNARGIITARHRGGGHKRLYRKIDFRRNEKDIYGRIVTIEYDPNRNAYICLIHYGDGEKRYILHPRGAIIGDTIVSGTEVPIKMGNALPLTDMPLGTAIHNIEITLGKGGQLARAAGAVAKLIAKEGKSATLKLPSGEVRLISKNCSATVGQVGNVGVNQKSLGRAGSKRWLGKRPVVRGVVMNPVDHPHGGGEGRAPIGRKNPTTPWGYPALGKRSRKRNKYSDNFIIRRRSK.

Disordered stretches follow at residues 1 to 22 and 225 to 274; these read MAIH…DNQV and PVDH…RRSK.

This sequence belongs to the universal ribosomal protein uL2 family. As to quaternary structure, part of the 50S ribosomal subunit.

The protein localises to the plastid. It is found in the chloroplast. The protein is Large ribosomal subunit protein uL2c (rpl2) of Silene latifolia (White campion).